A 374-amino-acid polypeptide reads, in one-letter code: Fanconi anemia group F protein (374 aa).

In terms of assembly, belongs to the multisubunit FA complex composed of FANCA, FANCB, FANCC, FANCE, FANCF, FANCG, FANCL/PHF9 and FANCM. The complex is not found in FA patients. In complex with FANCA, FANCG and FANCL, but not with FANCC, nor FANCE, interacts with HES1; this interaction may be essential for the stability and nuclear localization of FA core complex proteins.

It is found in the nucleus. In terms of biological role, DNA repair protein that may operate in a postreplication repair or a cell cycle checkpoint function. May be implicated in interstrand DNA cross-link repair and in the maintenance of normal chromosome stability. The sequence is that of Fanconi anemia group F protein (FANCF) from Homo sapiens (Human).